The chain runs to 215 residues: Peroxiredoxin 1 (215 aa).

Positions Val2–Val158 constitute a Thioredoxin domain. The active-site Cysteine sulfenic acid (-SOH) intermediate is the Cys46. Substrate is bound at residue Arg121.

The protein belongs to the peroxiredoxin family. Prx6 subfamily. As to quaternary structure, homodecamer. Pentamer of dimers that assemble into a ring structure.

The protein localises to the cytoplasm. It catalyses the reaction a hydroperoxide + [thioredoxin]-dithiol = an alcohol + [thioredoxin]-disulfide + H2O. Its function is as follows. Thiol-specific peroxidase that catalyzes the reduction of hydrogen peroxide and organic hydroperoxides to water and alcohols, respectively. Plays a role in cell protection against oxidative stress by detoxifying peroxides. In Sulfurisphaera tokodaii (strain DSM 16993 / JCM 10545 / NBRC 100140 / 7) (Sulfolobus tokodaii), this protein is Peroxiredoxin 1.